Consider the following 369-residue polypeptide: tRNA-specific 2-thiouridylase MnmA (369 aa).

Residues 12-19 (GMSGGVDS) and Met-38 contribute to the ATP site. The interval 98 to 100 (NPD) is interaction with target base in tRNA. The active-site Nucleophile is the Cys-103. Cys-103 and Cys-200 form a disulfide bridge. Residue Gly-128 participates in ATP binding. An interaction with tRNA region spans residues 150 to 152 (KDQ). The Cysteine persulfide intermediate role is filled by Cys-200. The interval 312 to 313 (RY) is interaction with tRNA.

It belongs to the MnmA/TRMU family.

It localises to the cytoplasm. It carries out the reaction S-sulfanyl-L-cysteinyl-[protein] + uridine(34) in tRNA + AH2 + ATP = 2-thiouridine(34) in tRNA + L-cysteinyl-[protein] + A + AMP + diphosphate + H(+). Functionally, catalyzes the 2-thiolation of uridine at the wobble position (U34) of tRNA, leading to the formation of s(2)U34. This is tRNA-specific 2-thiouridylase MnmA from Tolumonas auensis (strain DSM 9187 / NBRC 110442 / TA 4).